The chain runs to 315 residues: Acetyl-coenzyme A carboxylase carboxyl transferase subunit alpha (315 aa).

The CoA carboxyltransferase C-terminal domain maps to 39-293 (RLQDKSSTLT…RADLIEQLDM (255 aa)).

Belongs to the AccA family. Acetyl-CoA carboxylase is a heterohexamer composed of biotin carboxyl carrier protein (AccB), biotin carboxylase (AccC) and two subunits each of ACCase subunit alpha (AccA) and ACCase subunit beta (AccD).

The protein resides in the cytoplasm. The catalysed reaction is N(6)-carboxybiotinyl-L-lysyl-[protein] + acetyl-CoA = N(6)-biotinyl-L-lysyl-[protein] + malonyl-CoA. It participates in lipid metabolism; malonyl-CoA biosynthesis; malonyl-CoA from acetyl-CoA: step 1/1. Functionally, component of the acetyl coenzyme A carboxylase (ACC) complex. First, biotin carboxylase catalyzes the carboxylation of biotin on its carrier protein (BCCP) and then the CO(2) group is transferred by the carboxyltransferase to acetyl-CoA to form malonyl-CoA. The chain is Acetyl-coenzyme A carboxylase carboxyl transferase subunit alpha from Pseudomonas entomophila (strain L48).